The following is an 81-amino-acid chain: uncharacterized protein (81 aa).

This is an uncharacterized protein from Schizosaccharomyces pombe (strain 972 / ATCC 24843) (Fission yeast).